The chain runs to 921 residues: TRPM8 channel-associated factor 1 (921 aa).

Residues 542–841 enclose the Peptidase M60 domain; that stretch reads YCWMSTGLYI…TYLQLQEAFG (300 aa).

Belongs to the TCAF family. As to quaternary structure, interacts with TRPM8 (via N-terminus and C-terminus domains); the interaction inhibits TRPM8 channel activity. Interacts with TRPV6.

The protein resides in the cell membrane. In terms of biological role, positively regulates the plasma membrane cation channel TRPM8 activity. Involved in the recruitment of TRPM8 to the cell surface. Promotes prostate cancer cell migration inhibition in a TRPM8-dependent manner. This Bos taurus (Bovine) protein is TRPM8 channel-associated factor 1.